The primary structure comprises 348 residues: EGF-like domain-containing protein 1 (348 aa).

The signal sequence occupies residues 1–19 (MFYLSTFMTIVISLSLVSC). One can recognise an EGF-like domain in the interval 60–92 (TGSNCTVTCQNNGKCYDGSKCLCSSDYTGDLCE). 3 disulfide bridges follow: Cys-64/Cys-74, Cys-68/Cys-80, and Cys-82/Cys-91. The ZP domain maps to 99–342 (RCTLDAVVFE…PTCAAPXVGQ (244 aa)).

Prismatic layer of shell (at protein level). Expressed primarily in the mantle with highest level in the mantle edge and lower level in the mantle pallium.

Its subcellular location is the secreted. In Pinctada maxima (Silver-lipped pearl oyster), this protein is EGF-like domain-containing protein 1.